Reading from the N-terminus, the 405-residue chain is Cytochrome P450 130 (405 aa).

Substrate-binding residues include Asp93 and His97. Positions 101, 243, 295, 318, 348, 352, and 354 each coordinate heme.

The protein belongs to the cytochrome P450 family. As to quaternary structure, homodimer. Heme serves as cofactor.

This is Cytochrome P450 130 (cyp130) from Mycobacterium tuberculosis (strain CDC 1551 / Oshkosh).